The primary structure comprises 248 residues: ATP synthase subunit a, chloroplastic (248 aa).

Transmembrane regions (helical) follow at residues 38–58 (QVLI…TIAV), 96–116 (VPFI…GALL), 135–155 (INTT…AGLA), 200–220 (LVVA…VMFL), and 221–241 (GLFT…AYIG).

It belongs to the ATPase A chain family. As to quaternary structure, F-type ATPases have 2 components, CF(1) - the catalytic core - and CF(0) - the membrane proton channel. CF(1) has five subunits: alpha(3), beta(3), gamma(1), delta(1), epsilon(1). CF(0) has four main subunits: a, b, b' and c.

It localises to the plastid. It is found in the chloroplast thylakoid membrane. Its function is as follows. Key component of the proton channel; it plays a direct role in the translocation of protons across the membrane. This is ATP synthase subunit a, chloroplastic from Cycas taitungensis (Prince sago).